Consider the following 500-residue polypeptide: Cytochrome P450 71B22 (500 aa).

The chain crosses the membrane as a helical span at residues 1-21; sequence MSISLYFLLLLPLFLIFFKKL. Heme is bound at residue cysteine 441.

Belongs to the cytochrome P450 family. It depends on heme as a cofactor.

The protein resides in the membrane. In Arabidopsis thaliana (Mouse-ear cress), this protein is Cytochrome P450 71B22 (CYP71B22).